A 128-amino-acid chain; its full sequence is Holo-[acyl-carrier-protein] synthase (128 aa).

Mg(2+) contacts are provided by aspartate 7 and glutamate 55.

The protein belongs to the P-Pant transferase superfamily. AcpS family. Mg(2+) is required as a cofactor.

The protein localises to the cytoplasm. The catalysed reaction is apo-[ACP] + CoA = holo-[ACP] + adenosine 3',5'-bisphosphate + H(+). Transfers the 4'-phosphopantetheine moiety from coenzyme A to a Ser of acyl-carrier-protein. The polypeptide is Holo-[acyl-carrier-protein] synthase (Moorella thermoacetica (strain ATCC 39073 / JCM 9320)).